The following is a 428-amino-acid chain: MKKPFYKILYVQVLAAIVIGVLLGHFEPKLAVNMKPLGDGFIQLIKMVIGPIIFCTVVSGIAGMRDMKKVGRVGGKALLYFEVVSTFALVIGLVAGHIFNPGSGFNVDVNSIDAKAVAQYAAKAQSSSTVDFLLNIIPSTVVDAFAKGDILQILLIALLFGGALSAMGERAQMVTDFIDQIAHVFFRIVHVITRVAPIGAFGAMAFTIGKYGVVSLVPLLKLIGTFYLTAIIFVVVVLGIIARLTGFSIFRFVAYIKEELLIVLGTSSSESALPHLMEKMEKLGCSKSVVGLVVPTGYSFNLDGTNIYMTMAVIFISQALNIELTLTQQLTILAVAMLTSKGASGITGAGFITLAATLAVVPTIPVAGMVLILGIDRFMSECRALTNITGNGVACVVISAWERELDRTKLARVMSGDRGETVSATPAA.

The next 8 membrane-spanning stretches (helical) occupy residues 5–27 (FYKILYVQVLAAIVIGVLLGHFE), 42–64 (IQLIKMVIGPIIFCTVVSGIAGM), 77–99 (ALLYFEVVSTFALVIGLVAGHIF), 150–167 (ILQILLIALLFGGALSAM), 188–210 (IVHVITRVAPIGAFGAMAFTIGK), 225–247 (TFYLTAIIFVVVVLGIIARLTGF), 314–336 (IFISQALNIELTLTQQLTILAVA), and 351–373 (FITLAATLAVVPTIPVAGMVLIL).

Belongs to the dicarboxylate/amino acid:cation symporter (DAACS) (TC 2.A.23) family.

It is found in the cell inner membrane. Functionally, responsible for the transport of dicarboxylates such as succinate, fumarate, and malate from the periplasm across the membrane. The protein is C4-dicarboxylate transport protein 1 (dctA1) of Ralstonia nicotianae (strain ATCC BAA-1114 / GMI1000) (Ralstonia solanacearum).